The sequence spans 540 residues: uncharacterized protein (540 aa).

A chloroplast-targeting transit peptide spans M1–L58. In terms of domain architecture, Protein kinase spans Y195–N533. Residues I201–V209 and K224 contribute to the ATP site. The active-site Proton acceptor is D362.

It belongs to the protein kinase superfamily. ADCK protein kinase family.

It localises to the plastid. Its subcellular location is the chloroplast. It is found in the plastoglobule. This is an uncharacterized protein from Arabidopsis thaliana (Mouse-ear cress).